Here is a 189-residue protein sequence, read N- to C-terminus: Threonylcarbamoyl-AMP synthase (189 aa).

Residues 7–189 (NFTVKGLTEQ…DAITGKIIRK (183 aa)) form the YrdC-like domain.

Belongs to the SUA5 family. TsaC subfamily.

Its subcellular location is the cytoplasm. The enzyme catalyses L-threonine + hydrogencarbonate + ATP = L-threonylcarbamoyladenylate + diphosphate + H2O. In terms of biological role, required for the formation of a threonylcarbamoyl group on adenosine at position 37 (t(6)A37) in tRNAs that read codons beginning with adenine. Catalyzes the conversion of L-threonine, HCO(3)(-)/CO(2) and ATP to give threonylcarbamoyl-AMP (TC-AMP) as the acyladenylate intermediate, with the release of diphosphate. The chain is Threonylcarbamoyl-AMP synthase from Blochmanniella floridana.